The sequence spans 324 residues: tRNA dimethylallyltransferase (324 aa).

17-24 (GPTASGKT) is a binding site for ATP. A substrate-binding site is contributed by 19–24 (TASGKT). Interaction with substrate tRNA regions lie at residues 42-45 (DSAL), 166-170 (QRIQR), 251-256 (RCVGYR), and 284-291 (KRQITWLR).

Belongs to the IPP transferase family. As to quaternary structure, monomer. Mg(2+) serves as cofactor.

It carries out the reaction adenosine(37) in tRNA + dimethylallyl diphosphate = N(6)-dimethylallyladenosine(37) in tRNA + diphosphate. Catalyzes the transfer of a dimethylallyl group onto the adenine at position 37 in tRNAs that read codons beginning with uridine, leading to the formation of N6-(dimethylallyl)adenosine (i(6)A). In Burkholderia orbicola (strain AU 1054), this protein is tRNA dimethylallyltransferase.